Reading from the N-terminus, the 154-residue chain is MKIWIDADACPRVVKDIVFRASERLKVPVCLVANTDLSRAHTSLITSVRVKAGFDVADDYIAENAEACDLVITADIPLAARVVEKGGVALDPRGELYTEENVGERLSYRNLMAELRTDGLLVGGPAQLGLTDRNRFASALDRLLTKMVREHRSQ.

Belongs to the UPF0178 family.

This is UPF0178 protein Gbem_2221 from Citrifermentans bemidjiense (strain ATCC BAA-1014 / DSM 16622 / JCM 12645 / Bem) (Geobacter bemidjiensis).